The primary structure comprises 339 residues: Heat-inducible transcription repressor HrcA (339 aa).

It belongs to the HrcA family.

Its function is as follows. Negative regulator of class I heat shock genes (grpE-dnaK-dnaJ and groELS operons). Prevents heat-shock induction of these operons. This chain is Heat-inducible transcription repressor HrcA, found in Paraburkholderia phymatum (strain DSM 17167 / CIP 108236 / LMG 21445 / STM815) (Burkholderia phymatum).